The following is a 181-amino-acid chain: Alkyl hydroperoxide reductase AhpD (181 aa).

C131 serves as the catalytic Proton donor. A disulfide bridge connects residues C131 and C134. Residue C134 is the Cysteine sulfenic acid (-SOH) intermediate of the active site.

It belongs to the AhpD family.

It carries out the reaction N(6)-[(R)-dihydrolipoyl]-L-lysyl-[lipoyl-carrier protein] + a hydroperoxide = N(6)-[(R)-lipoyl]-L-lysyl-[lipoyl-carrier protein] + an alcohol + H2O. Functionally, antioxidant protein with alkyl hydroperoxidase activity. Required for the reduction of the AhpC active site cysteine residues and for the regeneration of the AhpC enzyme activity. This Rhodopseudomonas palustris (strain BisB18) protein is Alkyl hydroperoxide reductase AhpD.